Reading from the N-terminus, the 198-residue chain is Superoxide dismutase [Mn], mitochondrial (198 aa).

His-26 is a Mn(2+) binding site. 3'-nitrotyrosine is present on Tyr-34. 2 positions are modified to N6-acetyllysine; alternate: Lys-44 and Lys-51. 2 positions are modified to N6-succinyllysine; alternate: Lys-44 and Lys-51. His-74 provides a ligand contact to Mn(2+). N6-acetyllysine is present on Lys-90. 2 positions are modified to N6-acetyllysine; alternate: Lys-98 and Lys-106. N6-succinyllysine; alternate is present on residues Lys-98 and Lys-106. Residues Asp-159 and His-163 each coordinate Mn(2+). Lys-178 carries the N6-acetyllysine modification.

The protein belongs to the iron/manganese superoxide dismutase family. Homotetramer. Requires Mn(2+) as cofactor. Post-translationally, nitrated under oxidative stress. Nitration coupled with oxidation inhibits the catalytic activity. Acetylation at Lys-98 decreases enzymatic activity. Deacetylated by SIRT3 upon exposure to ionizing radiations or after long fasting. In terms of processing, polyubiquitinated; leading to proteasomal degradation. Deubiquitinated by USP36 which increases protein stability.

It is found in the mitochondrion matrix. It catalyses the reaction 2 superoxide + 2 H(+) = H2O2 + O2. In terms of biological role, destroys superoxide anion radicals which are normally produced within the cells and which are toxic to biological systems. The sequence is that of Superoxide dismutase [Mn], mitochondrial (SOD2) from Pan troglodytes (Chimpanzee).